The chain runs to 498 residues: ATP synthase subunit beta, chloroplastic (498 aa).

172-179 (GGAGVGKT) lines the ATP pocket.

It belongs to the ATPase alpha/beta chains family. As to quaternary structure, F-type ATPases have 2 components, CF(1) - the catalytic core - and CF(0) - the membrane proton channel. CF(1) has five subunits: alpha(3), beta(3), gamma(1), delta(1), epsilon(1). CF(0) has four main subunits: a(1), b(1), b'(1) and c(9-12).

The protein localises to the plastid. It localises to the chloroplast thylakoid membrane. The catalysed reaction is ATP + H2O + 4 H(+)(in) = ADP + phosphate + 5 H(+)(out). Functionally, produces ATP from ADP in the presence of a proton gradient across the membrane. The catalytic sites are hosted primarily by the beta subunits. This chain is ATP synthase subunit beta, chloroplastic, found in Daucus carota (Wild carrot).